The primary structure comprises 68 residues: Guanine nucleotide-binding protein G(I)/G(S)/G(O) subunit gamma-5B (68 aa).

The G protein gamma domain occupies 3-68 (GFSSVAATKK…FRPQKVCSFL (66 aa)). The residue at position 65 (Cys65) is a Cysteine methyl ester. Cys65 is lipidated: S-geranylgeranyl cysteine. A propeptide spans 66–68 (SFL) (removed in mature form).

This sequence belongs to the G protein gamma family. G proteins are composed of 3 units; alpha, beta and gamma.

The protein localises to the cell membrane. Guanine nucleotide-binding proteins (G proteins) are involved as a modulator or transducer in various transmembrane signaling systems. The beta and gamma chains are required for the GTPase activity, for replacement of GDP by GTP, and for G protein-effector interaction. The sequence is that of Guanine nucleotide-binding protein G(I)/G(S)/G(O) subunit gamma-5B from Homo sapiens (Human).